Consider the following 397-residue polypeptide: Izumo sperm-egg fusion protein 1 (397 aa).

Residues 1 to 21 (MGPHFTLLLAALANCLCPGRP) form the signal peptide. 5 disulfide bridges follow: Cys22-Cys149, Cys25-Cys152, Cys135-Cys159, Cys139-Cys165, and Cys182-Cys233. Over 22-319 (CIKCDQFVTD…QNPEKKMKTR (298 aa)) the chain is Extracellular. Residues 148-160 (WCLKCEKQLHICR) are important for interaction with IZUMO1R. The 85-residue stretch at 167–251 (ERHIEVHRSE…HATVIRYDVT (85 aa)) folds into the Ig-like C2-type domain. Residue Asn204 is glycosylated (N-linked (GlcNAc...) asparagine). Residues 271 to 292 (EHETPVHVTPQTPPGQEPESEL) form a disordered region. Residues 320–340 (LLILLTLGFVVLVASIIISVL) traverse the membrane as a helical segment. The Cytoplasmic portion of the chain corresponds to 341–397 (HFRKVSAKLKNASDEVKPTASGSKSDQSLSQQMGLKKASQADFNSDYSGDKSEATEN). The interval 351-397 (NASDEVKPTASGSKSDQSLSQQMGLKKASQADFNSDYSGDKSEATEN) is disordered. Polar residues predominate over residues 360–373 (ASGSKSDQSLSQQM). At Ser379 the chain carries Phosphoserine. Residues 388–397 (SGDKSEATEN) are compositionally biased toward basic and acidic residues.

This sequence belongs to the Izumo family. In terms of assembly, monomer, homodimer; disulfide-linked and homooligomer; depending on the context. Interacts with IZUMO1R/JUNO. IZUMO1 and IZUMO1R/JUNO form a complex with 1:1 stoichiometry. In gamete recognition, IZUMO1R/JUNO first binds to monomeric IZUMO1. The weak, but specific interaction with IZUMO1R/JUNO induces IZUMO1 homodimerization. The process follows a tight binding phase where IZUMO1 bends the entire structure towards the sperm membrane side through a thiol-disulfide exchange reaction. The molecule no longer binds to IZUMO1R/JUNO and instead binds to a putative second oocyte receptor. Interacts with ACE3. Part of a oolemmal binding multimeric complex (IZUMO1 complex) composed at least of IZUMO1 and GLIPR1L1; the complex assemblage is influenced by the maturation status of the male germ cell. Interacts with GLIPR1L1. Interacts with FREY; the interaction retains IZUMO1 at the endoplasmic reticulum membrane and coordinates IZUMO1 complex assembly. Interacts with WDR54. Forms a complex with SPACA6 and TMEM81 on spermatocyte cell membrane. In terms of processing, N-glycosylated. Glycosylation is not essential for fusion and for proper protein trafficking in sperm. Post-translationally, phosphorylated. The cytoplasmic C-terminus is phosphorylated and undergoes phosphorylation changes during epididymal transit. As to expression, sperm-specific (at protein level). Detectable on sperm surface only after the acrosome reaction. Expressed in spermatozoa, more abundantly expressed in the head than the tail (at protein level).

It localises to the cell membrane. The protein resides in the cytoplasmic vesicle. The protein localises to the secretory vesicle. It is found in the acrosome membrane. Essential sperm cell-surface protein required for fertilization by acting as a ligand for IZUMO1R/JUNO receptor on egg. The IZUMO1:IZUMO1R/JUNO interaction is a necessary adhesion event between sperm and egg that is required for fertilization but is not sufficient for cell fusion. The ligand-receptor interaction probably does not act as a membrane 'fusogen'. Plays a critical role in sperm-oolemma binding prior to plasma membrane fusion. Can mediate cell-cell fusion in cultured mammalian cells independently of its binding to IZUMO1R/JUNO. The protein is Izumo sperm-egg fusion protein 1 of Mus musculus (Mouse).